The chain runs to 234 residues: DNA repair protein RecO (234 aa).

This sequence belongs to the RecO family.

Its function is as follows. Involved in DNA repair and RecF pathway recombination. The sequence is that of DNA repair protein RecO from Coxiella burnetii (strain RSA 331 / Henzerling II).